The sequence spans 82 residues: Neuromacin (82 aa).

Positions methionine 1–proline 23 are cleaved as a signal peptide. 4 cysteine pairs are disulfide-bonded: cysteine 25/cysteine 32, cysteine 47/cysteine 51, cysteine 61/cysteine 69, and cysteine 79/cysteine 81.

This sequence belongs to the macin family.

It localises to the secreted. This is Neuromacin from Hirudo medicinalis (Medicinal leech).